A 558-amino-acid chain; its full sequence is Polysialic acid transport protein KpsD (558 aa).

The first 20 residues, 1-20 (MKLFKSILLIAACHAAQASA), serve as a signal peptide directing secretion.

This sequence to E.coli K5 KpsD.

The protein localises to the periplasm. In terms of biological role, involved in the translocation of the polysialic acid capsule across the outer membrane to the cell surface. May function as the periplasmic binding element of the PSA transport system, in which it transiently interacts with the membrane component of the transporter, binds polysaccharide and transports the polymer to a component in the outer membrane. This Escherichia coli protein is Polysialic acid transport protein KpsD (kpsD).